The following is a 189-amino-acid chain: CDP-archaeol synthase (189 aa).

5 consecutive transmembrane segments (helical) span residues 6 to 26 (VAIA…AVLA), 71 to 91 (GVVL…TVGV), 96 to 116 (IAAA…ASFL), 125 to 145 (GAAF…ALTA), and 162 to 184 (VAIF…AFGL).

This sequence belongs to the CDP-archaeol synthase family. The cofactor is Mg(2+).

Its subcellular location is the cell membrane. The enzyme catalyses 2,3-bis-O-(geranylgeranyl)-sn-glycerol 1-phosphate + CTP + H(+) = CDP-2,3-bis-O-(geranylgeranyl)-sn-glycerol + diphosphate. It functions in the pathway membrane lipid metabolism; glycerophospholipid metabolism. Its function is as follows. Catalyzes the formation of CDP-2,3-bis-(O-geranylgeranyl)-sn-glycerol (CDP-archaeol) from 2,3-bis-(O-geranylgeranyl)-sn-glycerol 1-phosphate (DGGGP) and CTP. This reaction is the third ether-bond-formation step in the biosynthesis of archaeal membrane lipids. This Natronomonas pharaonis (strain ATCC 35678 / DSM 2160 / CIP 103997 / JCM 8858 / NBRC 14720 / NCIMB 2260 / Gabara) (Halobacterium pharaonis) protein is CDP-archaeol synthase.